We begin with the raw amino-acid sequence, 404 residues long: Cysteine desulfurase IscS (404 aa).

Pyridoxal 5'-phosphate-binding positions include 75–76, Asn155, Gln183, and 203–205; these read AT and SGH. An N6-(pyridoxal phosphate)lysine modification is found at Lys206. Pyridoxal 5'-phosphate is bound at residue Thr243. Catalysis depends on Cys328, which acts as the Cysteine persulfide intermediate. Cys328 provides a ligand contact to [2Fe-2S] cluster.

Belongs to the class-V pyridoxal-phosphate-dependent aminotransferase family. NifS/IscS subfamily. In terms of assembly, homodimer. Forms a heterotetramer with IscU, interacts with other sulfur acceptors. It depends on pyridoxal 5'-phosphate as a cofactor.

It is found in the cytoplasm. It catalyses the reaction (sulfur carrier)-H + L-cysteine = (sulfur carrier)-SH + L-alanine. Its pathway is cofactor biosynthesis; iron-sulfur cluster biosynthesis. Master enzyme that delivers sulfur to a number of partners involved in Fe-S cluster assembly, tRNA modification or cofactor biosynthesis. Catalyzes the removal of elemental sulfur atoms from cysteine to produce alanine. Functions as a sulfur delivery protein for Fe-S cluster synthesis onto IscU, an Fe-S scaffold assembly protein, as well as other S acceptor proteins. The protein is Cysteine desulfurase IscS of Shewanella halifaxensis (strain HAW-EB4).